A 269-amino-acid polypeptide reads, in one-letter code: RBPJ-interacting and tubulin-associated protein 1 (269 aa).

Residues 5-17 (VELAVSGMQTLGL) carry the Nuclear export signal motif. 2 disordered regions span residues 66–105 (VGKE…PISH) and 141–269 (LWTP…PPWK). Residues 80-92 (CETTPSRGSTPTL) are compositionally biased toward polar residues. Positions 92–108 (LTPRKKNKYRPISHTPS) match the Nuclear localization signal motif. The segment at 128–156 (RMAKGDAAKLRALLWTPPPTPRGSHSPRP) is interaction with RBPJ/RBPSUH. Residues 156–269 (PREAPLRAIH…ATQKPKPPWK (114 aa)) are interaction with tubulin. Polar residues predominate over residues 200 to 253 (HSLTHLNVPSTGHPATSAPHTNGPQDLRPSTSGVTFRSPLVTSRARSVSISVPS).

The protein belongs to the RITA family. As to quaternary structure, interacts with RBPJ/RBPSUH.

It is found in the cytoplasm. It localises to the nucleus. The protein resides in the cytoskeleton. The protein localises to the microtubule organizing center. Its subcellular location is the centrosome. Functionally, tubulin-binding protein that acts as a negative regulator of Notch signaling pathway. Shuttles between the cytoplasm and the nucleus and mediates the nuclear export of RBPJ/RBPSUH, thereby preventing the interaction between RBPJ/RBPSUH and NICD product of Notch proteins (Notch intracellular domain), leading to down-regulate Notch-mediated transcription. May play a role in neurogenesis. This Homo sapiens (Human) protein is RBPJ-interacting and tubulin-associated protein 1 (RITA1).